The sequence spans 440 residues: Proline--tRNA ligase (440 aa).

The protein belongs to the class-II aminoacyl-tRNA synthetase family. ProS type 2 subfamily. In terms of assembly, homodimer.

Its subcellular location is the cytoplasm. It carries out the reaction tRNA(Pro) + L-proline + ATP = L-prolyl-tRNA(Pro) + AMP + diphosphate. Catalyzes the attachment of proline to tRNA(Pro) in a two-step reaction: proline is first activated by ATP to form Pro-AMP and then transferred to the acceptor end of tRNA(Pro). In Rhizobium johnstonii (strain DSM 114642 / LMG 32736 / 3841) (Rhizobium leguminosarum bv. viciae), this protein is Proline--tRNA ligase.